The chain runs to 43 residues: Protein PsbN (43 aa).

The chain crosses the membrane as a helical span at residues 7–24 (VAISISRSLVSFTGYALY).

It belongs to the PsbN family.

It is found in the plastid. Its subcellular location is the chloroplast thylakoid membrane. Functionally, may play a role in photosystem I and II biogenesis. In Ginkgo biloba (Ginkgo), this protein is Protein PsbN.